Here is a 424-residue protein sequence, read N- to C-terminus: Phosphomethylpyrimidine synthase (424 aa).

Residues N66, M95, Y124, H163, 185–187 (SRG), 226–229 (DGMR), and E265 each bind substrate. Position 269 (H269) interacts with Zn(2+). F292 is a substrate binding site. H333 is a binding site for Zn(2+). Positions 408, 411, and 415 each coordinate [4Fe-4S] cluster.

This sequence belongs to the ThiC family. Requires [4Fe-4S] cluster as cofactor.

The catalysed reaction is 5-amino-1-(5-phospho-beta-D-ribosyl)imidazole + S-adenosyl-L-methionine = 4-amino-2-methyl-5-(phosphooxymethyl)pyrimidine + CO + 5'-deoxyadenosine + formate + L-methionine + 3 H(+). Its pathway is cofactor biosynthesis; thiamine diphosphate biosynthesis. Functionally, catalyzes the synthesis of the hydroxymethylpyrimidine phosphate (HMP-P) moiety of thiamine from aminoimidazole ribotide (AIR) in a radical S-adenosyl-L-methionine (SAM)-dependent reaction. This chain is Phosphomethylpyrimidine synthase, found in Thermotoga sp. (strain RQ2).